The sequence spans 468 residues: 3-isopropylmalate dehydratase large subunit (468 aa).

Residues C347, C407, and C410 each coordinate [4Fe-4S] cluster.

It belongs to the aconitase/IPM isomerase family. LeuC type 1 subfamily. Heterodimer of LeuC and LeuD. The cofactor is [4Fe-4S] cluster.

The catalysed reaction is (2R,3S)-3-isopropylmalate = (2S)-2-isopropylmalate. It functions in the pathway amino-acid biosynthesis; L-leucine biosynthesis; L-leucine from 3-methyl-2-oxobutanoate: step 2/4. Functionally, catalyzes the isomerization between 2-isopropylmalate and 3-isopropylmalate, via the formation of 2-isopropylmaleate. The sequence is that of 3-isopropylmalate dehydratase large subunit from Prochlorococcus marinus (strain AS9601).